Consider the following 307-residue polypeptide: Ribonuclease Z (307 aa).

Residues His-63, His-65, Asp-67, His-68, His-141, Asp-212, and His-270 each coordinate Zn(2+). Residue Asp-67 is the Proton acceptor of the active site.

It belongs to the RNase Z family. In terms of assembly, homodimer. Zn(2+) is required as a cofactor.

The enzyme catalyses Endonucleolytic cleavage of RNA, removing extra 3' nucleotides from tRNA precursor, generating 3' termini of tRNAs. A 3'-hydroxy group is left at the tRNA terminus and a 5'-phosphoryl group is left at the trailer molecule.. In terms of biological role, zinc phosphodiesterase, which displays some tRNA 3'-processing endonuclease activity. Probably involved in tRNA maturation, by removing a 3'-trailer from precursor tRNA. In Bacillus cereus (strain ATCC 14579 / DSM 31 / CCUG 7414 / JCM 2152 / NBRC 15305 / NCIMB 9373 / NCTC 2599 / NRRL B-3711), this protein is Ribonuclease Z.